The primary structure comprises 72 residues: Translation initiation factor IF-1 (72 aa).

The S1-like domain occupies 1-72 (MAKEDNIEMQ…SKGRIVFRAR (72 aa)).

The protein belongs to the IF-1 family. In terms of assembly, component of the 30S ribosomal translation pre-initiation complex which assembles on the 30S ribosome in the order IF-2 and IF-3, IF-1 and N-formylmethionyl-tRNA(fMet); mRNA recruitment can occur at any time during PIC assembly.

It is found in the cytoplasm. In terms of biological role, one of the essential components for the initiation of protein synthesis. Stabilizes the binding of IF-2 and IF-3 on the 30S subunit to which N-formylmethionyl-tRNA(fMet) subsequently binds. Helps modulate mRNA selection, yielding the 30S pre-initiation complex (PIC). Upon addition of the 50S ribosomal subunit IF-1, IF-2 and IF-3 are released leaving the mature 70S translation initiation complex. This is Translation initiation factor IF-1 from Shewanella frigidimarina (strain NCIMB 400).